We begin with the raw amino-acid sequence, 208 residues long: 3-demethoxyubiquinol 3-hydroxylase (208 aa).

Glutamate 57, glutamate 87, histidine 90, glutamate 139, glutamate 171, and histidine 174 together coordinate Fe cation.

This sequence belongs to the COQ7 family. Requires Fe cation as cofactor.

It is found in the cell membrane. The enzyme catalyses a 5-methoxy-2-methyl-3-(all-trans-polyprenyl)benzene-1,4-diol + AH2 + O2 = a 3-demethylubiquinol + A + H2O. It participates in cofactor biosynthesis; ubiquinone biosynthesis. Functionally, catalyzes the hydroxylation of 2-nonaprenyl-3-methyl-6-methoxy-1,4-benzoquinol during ubiquinone biosynthesis. The chain is 3-demethoxyubiquinol 3-hydroxylase from Burkholderia multivorans (strain ATCC 17616 / 249).